Reading from the N-terminus, the 344-residue chain is Centromere protein L (344 aa).

Residues 1–32 are disordered; it reads MAGGRPAGSAIEMEGAMRTLPSSGRPSGTGWQ. Positions 20–32 are enriched in polar residues; the sequence is LPSSGRPSGTGWQ.

Belongs to the CENP-L/IML3 family. In terms of assembly, component of the CENPA-HI complex, at least composed of CENPH, CENPI, CENPK, CENPL, CENPM, CENPO and CENPP.

It localises to the nucleus. It is found in the chromosome. The protein resides in the centromere. Its function is as follows. Component of the CENPA-HI complex, a centromeric complex involved in assembly of kinetochore proteins, mitotic progression and chromosome segregation. The protein is Centromere protein L (CENPL) of Gallus gallus (Chicken).